The chain runs to 216 residues: Protein shisa-5 (216 aa).

Positions 1–26 are cleaved as a signal peptide; it reads MAAPAPAPRILVLLLLLLPAPEGAQS. Over 27–93 the chain is Extracellular; that stretch reads ELCMISHGRK…SGFDSDPVAR (67 aa). The chain crosses the membrane as a helical span at residues 94–114; sequence FGTVIAIGVTLFVIAVVTVIV. Topologically, residues 115 to 216 are cytoplasmic; sequence CCTCSCCCLY…AYMEPPKAVP (102 aa).

It belongs to the shisa family. In terms of assembly, interacts with PDCD6; PDCD6 can stabilize SHISA5.

It localises to the endoplasmic reticulum membrane. The protein localises to the nucleus membrane. Its function is as follows. Can induce apoptosis in a caspase-dependent manner and plays a role in p53/TP53-dependent apoptosis. This chain is Protein shisa-5 (SHISA5), found in Bos taurus (Bovine).